Consider the following 555-residue polypeptide: Chaperonin GroEL (555 aa).

ATP-binding positions include 29–32 (TLGP), Lys50, 86–90 (DGTTT), Gly418, and Asp499. Residues 528-555 (HEEDNNTGNRSGGGVGGGHHGGMGGMDF) are disordered. The span at 537–555 (RSGGGVGGGHHGGMGGMDF) shows a compositional bias: gly residues.

The protein belongs to the chaperonin (HSP60) family. As to quaternary structure, forms a cylinder of 14 subunits composed of two heptameric rings stacked back-to-back. Interacts with the co-chaperonin GroES.

It localises to the cytoplasm. It catalyses the reaction ATP + H2O + a folded polypeptide = ADP + phosphate + an unfolded polypeptide.. Functionally, together with its co-chaperonin GroES, plays an essential role in assisting protein folding. The GroEL-GroES system forms a nano-cage that allows encapsulation of the non-native substrate proteins and provides a physical environment optimized to promote and accelerate protein folding. This chain is Chaperonin GroEL, found in Orientia tsutsugamushi (strain Ikeda) (Rickettsia tsutsugamushi).